Consider the following 358-residue polypeptide: HLA class I histocompatibility antigen, alpha chain E (358 aa).

An N-terminal signal peptide occupies residues 1-21 (MVDGTLLLLLSEALALTQTWA). Residues 22–111 (GSHSLKYFHT…LRGYYNQSEA (90 aa)) are alpha-1. Over 22–305 (GSHSLKYFHT…KPASQPTIPI (284 aa)) the chain is Extracellular. Positions 28, 84, 87, 98, and 105 each coordinate a peptide antigen. N-linked (GlcNAc...) asparagine glycosylation occurs at asparagine 107. An alpha-2 region spans residues 112 to 203 (GSHTLQWMHG…EKGKETLLHL (92 aa)). The cysteines at positions 122 and 185 are disulfide-linked. Residues serine 164, lysine 167, glutamine 177, tyrosine 180, and tyrosine 192 each coordinate a peptide antigen. Positions 204-295 (EPPKTHVTHH…GLPEPVTLRW (92 aa)) are alpha-3. The Ig-like C1-type domain maps to 206–294 (PKTHVTHHPI…EGLPEPVTLR (89 aa)). Cysteine 224 and cysteine 280 are oxidised to a cystine. The tract at residues 296–305 (KPASQPTIPI) is connecting peptide. Residues 306–329 (VGIIAGLVLLGSVVSGAVVAAVIW) form a helical membrane-spanning segment. Residues 330–358 (RKKSSGGKGGSYSKAEWSDSAQGSESHSL) lie on the Cytoplasmic side of the membrane. Positions 333 to 358 (SSGGKGGSYSKAEWSDSAQGSESHSL) are disordered. The span at 348–358 (DSAQGSESHSL) shows a compositional bias: polar residues. Phosphoserine is present on serine 353.

Belongs to the MHC class I family. In terms of assembly, forms a heterotrimer with B2M and a self- or a pathogen-derived peptide (peptide-bound HLA-E-B2M). Similarly to MHC class Ia assembly, HLA-E-B2M heterodimer interacts with components of the antigen processing machinery TAPBP and TAP1-TAP2 complex; this interaction is required for peptide loading and translocation to the cell surface. Interacts with CALCR; this interaction is required for appropriate folding. The optimum binding peptide is a nonamer (VL9) that is primarily derived from amino-acid residues 3-11 of the signal sequences of most HLA-A, -B, -C and -G molecules. The VL9 peptide anchors to five main sites in the peptide-binding groove of HLA-E. Peptide-bound HLA-E-B2M complex interacts with KLRD1-KLRC1 receptor on NK cells. Binds with lower affinity to activating KLRD1-KLRC2. The common subunit KLRC1 plays a prominent role in directly interacting with HLA-E. Peptide-bound HLA-E-B2M interacts with the alpha-beta TCR on unconventional CD8+ T cells. Peptide-free HLA-E interacts with HLA-F-B2M complex; this interaction may regulate the intracellular trafficking and the stability of peptide-free MHC class I open conformers (OCs). Post-translationally, N-glycosylated. The soluble form (sHLA-E) can be partly produced by proteolytic cleavage at the cell surface (shedding) by a matrix metalloproteinase. Alternative splicing is also suggested as a mechanism for generation of sHLA-E, although it remains to be proved. In terms of tissue distribution, expressed in secretory endometrial cells during pregnancy (at protein level). The expression in nonlymphoid tissues is restricted to endothelial cells from all types of vessels, including arteries, veins, capillaries, and lymphatics (at protein level). In lymphoid organs, it is mainly expressed in endothelial venules, B and T cells, monocytes, macrophages, NK cells and megakaryocytes (at protein level).

The protein localises to the cell membrane. It localises to the golgi apparatus membrane. Its subcellular location is the secreted. In terms of biological role, non-classical major histocompatibility class Ib molecule involved in immune self-nonself discrimination. In complex with B2M/beta-2-microglobulin binds nonamer self-peptides derived from the signal sequence of classical MHC class Ia molecules (VL9 peptides - VMAPRT[V/L][L/V/I/F]L). Peptide-bound HLA-E-B2M heterotrimeric complex primarily functions as a ligand for natural killer (NK) cell inhibitory receptor KLRD1-KLRC1, enabling NK cells to monitor the expression of other MHC class I molecules in healthy cells and to tolerate self. Upon cellular stress, preferentially binds signal sequence-derived peptides from stress-induced chaperones and is no longer recognized by NK cell inhibitory receptor KLRD1-KLRC1, resulting in impaired protection from NK cells. Binds signal sequence-derived peptides from non-classical MHC class Ib HLA-G molecules and acts as a ligand for NK cell activating receptor KLRD1-KLRC2, likely playing a role in the generation and effector functions of adaptive NK cells and in maternal-fetal tolerance during pregnancy. Besides self-peptides, can also bind and present pathogen-derived peptides conformationally similar to VL9 peptides to alpha-beta T cell receptor (TCR) on unconventional CD8-positive cytotoxic T cells, ultimately triggering antimicrobial immune response. Presents HIV gag peptides (immunodominant KAFSPEVIPMF and subdominant KALGPAATL epitopes) predominantly to CD8-positive T cell clones expressing a TRAV17-containing TCR, triggering HLA-E-restricted T cell responses. Presents mycobacterial peptides to HLA-E-restricted CD8-positive T cells eliciting both cytotoxic and immunoregulatory functions. Functionally, (Microbial infection) Viruses like human cytomegalovirus have evolved an escape mechanism whereby virus-induced down-regulation of host MHC class I molecules is coupled to the binding of viral peptides to HLA-E, restoring HLA-E expression and inducing HLA-E-dependent NK cell immune tolerance to infected cells. Its function is as follows. (Microbial infection) May bind HIV-1 gag/Capsid protein p24-derived peptide (AISPRTLNA) on infected cells and may inhibit NK cell cytotoxicity, a mechanism that allows HIV-1 to escape immune recognition. (Microbial infection) Upon SARS-CoV-2 infection, may contribute to functional exhaustion of cytotoxic NK cells and CD8-positive T cells. Binds SARS-CoV-2 S/Spike protein S1-derived peptide (LQPRTFLL) expressed on the surface of lung epithelial cells, inducing NK cell exhaustion and dampening of antiviral immune surveillance. The protein is HLA class I histocompatibility antigen, alpha chain E of Homo sapiens (Human).